Here is a 491-residue protein sequence, read N- to C-terminus: D-xylose-proton symporter (491 aa).

Residues 1-9 (MNTQYNSSY) are Cytoplasmic-facing. A helical membrane pass occupies residues 10–30 (IFSITLVATLGGLLFGYDTAV). Topologically, residues 31-55 (ISGTVESLNTVFVAPQNLSESAANS) are periplasmic. A helical membrane pass occupies residues 56–76 (LLGFCVASALIGCIIGGALGG). Residues 77 to 89 (YCSNRFGRRDSLK) lie on the Cytoplasmic side of the membrane. Residues 90–110 (IAAVLFFISGVGSAWPELGFT) traverse the membrane as a helical segment. The Periplasmic portion of the chain corresponds to 111–133 (SINPDNTVPVYLAGYVPEFVIYR). Residues 134 to 154 (IIGGIGVGLASMLSPMYIAEL) traverse the membrane as a helical segment. The Cytoplasmic portion of the chain corresponds to 155–165 (APAHIRGKLVS). A helical transmembrane segment spans residues 166–186 (FNQFAIIFGQLLVYCVNYFIA). Residue Gln-168 coordinates beta-D-xylose. The Periplasmic portion of the chain corresponds to 187 to 200 (RSGDASWLNTDGWR). Residues 201–221 (YMFASECIPALLFLMLLYTVP) form a helical membrane-spanning segment. Residues 222 to 272 (ESPRWLMSRGKQEQAEGILRKIMGNTLATQAVQEIKHSLDHGRKTGGRLLM) are Cytoplasmic-facing. A helical membrane pass occupies residues 273–293 (FGVGVIVIGVMLSIFQQFVGI). Beta-D-xylose-binding positions include 288–289 (QQ) and Asn-294. Topologically, residues 294 to 312 (NVVLYYAPEVFKTLGASTD) are periplasmic. Residues 313–333 (IALLQTIIVGVINLTFTVLAI) form a helical membrane-spanning segment. At 334–343 (MTVDKFGRKP) the chain is on the cytoplasmic side. Residues 344 to 364 (LQIIGALGMAIGMFSLGTAFY) form a helical membrane-spanning segment. Residues 365–369 (TQAPG) are Periplasmic-facing. The helical transmembrane segment at 370 to 390 (IVALLSMLFYVAAFAMSWGPV) threads the bilayer. Topologically, residues 391 to 407 (CWVLLSEIFPNAIRGKA) are cytoplasmic. The beta-D-xylose site is built by Trp-392 and Gln-415. Residues 408–428 (LAIAVAAQWLANYFVSWTFPM) traverse the membrane as a helical segment. Residues 429-442 (MDKNSWLVAHFHNG) are Periplasmic-facing. The chain crosses the membrane as a helical span at residues 443–463 (FSYWIYGCMGVLAALFMWKFV). At 464 to 491 (PETKGKTLEELEALWEPETKKTQQTATL) the chain is on the cytoplasmic side.

Belongs to the major facilitator superfamily. Sugar transporter (TC 2.A.1.1) family.

Its subcellular location is the cell inner membrane. The enzyme catalyses D-xylose(in) + H(+)(in) = D-xylose(out) + H(+)(out). Functionally, uptake of D-xylose across the boundary membrane with the concomitant transport of protons into the cell (symport system). The sequence is that of D-xylose-proton symporter (xylE) from Escherichia coli O157:H7.